The chain runs to 428 residues: Serine--tRNA ligase (428 aa).

233-235 (TAE) contributes to the L-serine binding site. 264–266 (RRE) is a binding site for ATP. L-serine is bound at residue E287. 351–354 (EVSS) is a binding site for ATP. S387 provides a ligand contact to L-serine.

It belongs to the class-II aminoacyl-tRNA synthetase family. Type-1 seryl-tRNA synthetase subfamily. In terms of assembly, homodimer. The tRNA molecule binds across the dimer.

The protein resides in the cytoplasm. The catalysed reaction is tRNA(Ser) + L-serine + ATP = L-seryl-tRNA(Ser) + AMP + diphosphate + H(+). It carries out the reaction tRNA(Sec) + L-serine + ATP = L-seryl-tRNA(Sec) + AMP + diphosphate + H(+). It functions in the pathway aminoacyl-tRNA biosynthesis; selenocysteinyl-tRNA(Sec) biosynthesis; L-seryl-tRNA(Sec) from L-serine and tRNA(Sec): step 1/1. Catalyzes the attachment of serine to tRNA(Ser). Is also able to aminoacylate tRNA(Sec) with serine, to form the misacylated tRNA L-seryl-tRNA(Sec), which will be further converted into selenocysteinyl-tRNA(Sec). This is Serine--tRNA ligase from Salinibacter ruber (strain DSM 13855 / M31).